A 166-amino-acid polypeptide reads, in one-letter code: CDP-archaeol synthase (166 aa).

Helical transmembrane passes span 7–27, 55–75, 78–98, 116–136, and 138–158; these read LLLS…GPFI, LIVA…FFTA, TLIS…GAFI, LDFV…ITWY, and FLFI…VAYL.

Belongs to the CDP-archaeol synthase family. Requires Mg(2+) as cofactor.

The protein localises to the cell membrane. The enzyme catalyses 2,3-bis-O-(geranylgeranyl)-sn-glycerol 1-phosphate + CTP + H(+) = CDP-2,3-bis-O-(geranylgeranyl)-sn-glycerol + diphosphate. It participates in membrane lipid metabolism; glycerophospholipid metabolism. Functionally, catalyzes the formation of CDP-2,3-bis-(O-geranylgeranyl)-sn-glycerol (CDP-archaeol) from 2,3-bis-(O-geranylgeranyl)-sn-glycerol 1-phosphate (DGGGP) and CTP. This reaction is the third ether-bond-formation step in the biosynthesis of archaeal membrane lipids. The sequence is that of CDP-archaeol synthase from Saccharolobus islandicus (strain L.S.2.15 / Lassen #1) (Sulfolobus islandicus).